Reading from the N-terminus, the 1435-residue chain is Probable ATP-dependent DNA helicase HFM1 (1435 aa).

Residues 290–478 enclose the Helicase ATP-binding domain; it reads DDLLYTDRNF…WLSDGERPAV (189 aa). 303-310 provides a ligand contact to ATP; the sequence is APTGSGKT. The DEAH box signature appears at 411–414; it reads DEVH. A Helicase C-terminal domain is found at 519–720; the sequence is SVIQMYSDQK…DVNIAVEWIR (202 aa). The region spanning 777-1092 is the SEC63 domain; the sequence is PTEAGRLMAW…GLDIQQKLTV (316 aa). The interval 1109 to 1139 is disordered; that stretch reads KSETQISHSKHSDISTIAGPNKGTTASKKPG. Residues 1143-1158 form a C4-type zinc finger; the sequence is CNHLCKSKHTCGHDCC. The interval 1295–1315 is disordered; that stretch reads GFGNTLSSSTRGSKLPLQESK. Residues 1296–1306 are compositionally biased toward polar residues; sequence FGNTLSSSTRG.

It belongs to the helicase family. SKI2 subfamily. Zn(2+) serves as cofactor. In terms of tissue distribution, preferentially expressed in testis and ovary.

It catalyses the reaction Couples ATP hydrolysis with the unwinding of duplex DNA by translocating in the 3'-5' direction.. It carries out the reaction ATP + H2O = ADP + phosphate + H(+). Required for crossover formation and complete synapsis of homologous chromosomes during meiosis. This chain is Probable ATP-dependent DNA helicase HFM1 (HFM1), found in Homo sapiens (Human).